A 204-amino-acid chain; its full sequence is Heart- and neural crest derivatives-expressed protein 1 (204 aa).

Disordered stretches follow at residues 1-24 (MNLVGSYAHHHHHHHHHHHPHPAH), 57-115 (APDF…RTES), and 172-204 (LKKADGGRESKRKRELQQHEGFPPALGPGEKRD). Basic residues-rich tracts occupy residues 8–22 (AHHHHHHHHHHHPHP) and 98–110 (LGRRKGSGPKKER). Residues 100–152 (RRKGSGPKKERRRTESINSAFAELRECIPNVPADTKLSKIKTLRLATSYIAYL) enclose the bHLH domain. Thr-113 is subject to Phosphothreonine; by PLK4. Phosphoserine; by PLK4 is present on Ser-115.

As to quaternary structure, efficient DNA binding requires dimerization with another bHLH protein. Forms homodimers and heterodimers with TCF3 gene products E12 and E47, HAND2 and HEY1, HEY2 and HEYL (hairy-related transcription factors). Interacts with MDFIC. Interacts with SOX15; the interaction enhances HAND1-induced differentiation of trophoblast giant cells. Phosphorylation by PLK4 disrupts the interaction with MDFIC and leads to translocation into the nucleoplasm, allowing dimerization and transcription factor activity.

The protein resides in the nucleus. It localises to the nucleoplasm. It is found in the nucleolus. Transcription factor that plays an essential role in both trophoblast giant cell differentiation and in cardiac morphogenesis. Binds the DNA sequence 5'-NRTCTG-3' (non-canonical E-box). Acts as a transcriptional repressor of SOX15. In the adult, could be required for ongoing expression of cardiac-specific genes. The chain is Heart- and neural crest derivatives-expressed protein 1 (HAND1) from Ovis aries (Sheep).